A 633-amino-acid chain; its full sequence is Early transcription factor 70 kDa subunit (633 aa).

In terms of domain architecture, Helicase ATP-binding spans 32-185 (RTILDHNESV…SNIISIMSDE (154 aa)). Residue 45 to 52 (HIMGSGKT) participates in ATP binding. Positions 135 to 138 (DEAH) match the DEXH box motif. Residues 326 to 505 (KFKYFIDTIG…TLPFDIKKLL (180 aa)) enclose the Helicase C-terminal domain.

The protein belongs to the helicase family. VETF subfamily. As to quaternary structure, heterodimer of a 70 kDa and a 82 kDa subunit. Part of the early transcription complex composed of ETF, RAP94, and the DNA-directed RNA polymerase.

It is found in the virion. Its function is as follows. Acts with RNA polymerase to initiate transcription from early gene promoters. Is recruited by the RPO-associated protein of 94 kDa (RAP94) to form the early transcription complex, which also contains the core RNA polymerase. ETF heterodimer binds to early gene promoters. This Vertebrata (FPV) protein is Early transcription factor 70 kDa subunit (VETFS).